The sequence spans 411 residues: Ribose-phosphate pyrophosphokinase 3, chloroplastic (411 aa).

Residues 1–39 (MAAISPANATTAASLSLPQFSSTSSSLSSSSSPSFLNFK) constitute a chloroplast transit peptide. Asp231 and His233 together coordinate Mg(2+). Positions 314 to 329 (GRHVVIVDDLVQSGGT) are binding of phosphoribosylpyrophosphate.

It belongs to the ribose-phosphate pyrophosphokinase family.

It localises to the plastid. The protein localises to the chloroplast. It catalyses the reaction D-ribose 5-phosphate + ATP = 5-phospho-alpha-D-ribose 1-diphosphate + AMP + H(+). The chain is Ribose-phosphate pyrophosphokinase 3, chloroplastic (PRS3) from Arabidopsis thaliana (Mouse-ear cress).